A 478-amino-acid polypeptide reads, in one-letter code: NADH-ubiquinone oxidoreductase 49 kDa subunit, mitochondrial (478 aa).

A mitochondrion-targeting transit peptide spans Met-1–Tyr-42. Positions 341, 347, and 362 each coordinate [4Fe-4S] cluster.

It belongs to the complex I 49 kDa subunit family. As to quaternary structure, complex I is composed of about 40 different subunits. [4Fe-4S] cluster serves as cofactor.

The protein resides in the mitochondrion inner membrane. It catalyses the reaction a ubiquinone + NADH + 5 H(+)(in) = a ubiquinol + NAD(+) + 4 H(+)(out). In terms of biological role, core subunit of the mitochondrial membrane respiratory chain NADH dehydrogenase (Complex I) that is believed to belong to the minimal assembly required for catalysis. Complex I functions in the transfer of electrons from NADH to the respiratory chain. The immediate electron acceptor for the enzyme is believed to be ubiquinone. The sequence is that of NADH-ubiquinone oxidoreductase 49 kDa subunit, mitochondrial (nuo-49) from Neurospora crassa (strain ATCC 24698 / 74-OR23-1A / CBS 708.71 / DSM 1257 / FGSC 987).